The sequence spans 603 residues: Probable L-gulonolactone oxidase 6 (603 aa).

The N-terminal stretch at 1–35 (MAFTSSPSYGSLNAAFWRTIFVVHCISTLVFTTIS) is a signal peptide. One can recognise an FAD-binding PCMH-type domain in the interval 64 to 246 (STCRAANVAY…SQVTLKLQPM (183 aa)).

The protein belongs to the oxygen-dependent FAD-linked oxidoreductase family. FAD is required as a cofactor.

The catalysed reaction is L-gulono-1,4-lactone + O2 = L-ascorbate + H2O2 + H(+). It functions in the pathway cofactor biosynthesis; L-ascorbate biosynthesis. Functionally, may be involved in the biosynthesis of ascorbic acid. The protein is Probable L-gulonolactone oxidase 6 of Arabidopsis thaliana (Mouse-ear cress).